Consider the following 57-residue polypeptide: uncharacterized protein (57 aa).

The segment at 1 to 57 is disordered; the sequence is MANHRGGSGNFAEDRERASEAGKKGGQHSGGNFKNDPQRASEAGKKGGKSSHGKSDN. Basic and acidic residues-rich tracts occupy residues 12–23 and 36–45; these read AEDRERASEAGK and DPQRASEAGK. Basic residues predominate over residues 46-57; the sequence is KGGKSSHGKSDN.

It belongs to the con-10 family.

This is an uncharacterized protein from Escherichia coli (strain K12).